Consider the following 334-residue polypeptide: MQGAPLRHDWTREEAEVLYALPFPDLMFLAQATHRRHFDPTRLETASLLSIKTGGCPEDCGYCSQSAHYDTGLKATKLMDQDAVVATARRAKEAGADRFCMAAAWRNPKDRDLDQVCDMVSAVKDLGMETCVTLGMLTPPQAARLKQAGLDYYNHNVDTSPEFYDRIITTRTMQDRIDTLANVREAGIKVCCGGIIGMGEEVDDRLGMLVLLANLDAHPDSVPINMWNEVKGVPVNDTAERPDGIALARLIAVARIMMPRSVVRLSAGRQYMSDELQSLCLLAGANSIFIGDVLLTTANPQAERDADLLTRLGMTSSLSARSVAAVDENVSANA.

Positions 41–260 (TRLETASLLS…IAVARIMMPR (220 aa)) constitute a Radical SAM core domain. The [4Fe-4S] cluster site is built by cysteine 56, cysteine 60, and cysteine 63. Residues cysteine 100, cysteine 131, cysteine 191, and arginine 264 each contribute to the [2Fe-2S] cluster site.

The protein belongs to the radical SAM superfamily. Biotin synthase family. As to quaternary structure, homodimer. [4Fe-4S] cluster is required as a cofactor. It depends on [2Fe-2S] cluster as a cofactor.

The catalysed reaction is (4R,5S)-dethiobiotin + (sulfur carrier)-SH + 2 reduced [2Fe-2S]-[ferredoxin] + 2 S-adenosyl-L-methionine = (sulfur carrier)-H + biotin + 2 5'-deoxyadenosine + 2 L-methionine + 2 oxidized [2Fe-2S]-[ferredoxin]. Its pathway is cofactor biosynthesis; biotin biosynthesis; biotin from 7,8-diaminononanoate: step 2/2. Functionally, catalyzes the conversion of dethiobiotin (DTB) to biotin by the insertion of a sulfur atom into dethiobiotin via a radical-based mechanism. The chain is Biotin synthase from Bradyrhizobium sp. (strain ORS 278).